Reading from the N-terminus, the 78-residue chain is Kassorin-S (78 aa).

Residues 1 to 22 (MLTLKKSMLLLFFLGMVSLSLA) form the signal peptide. Residues 23–64 (NSKRADEEGEDKRADEEGEDKRADEEGEDKRADEEGEEKRKR) constitute a propeptide that is removed on maturation. The interval 24–60 (SKRADEEGEDKRADEEGEDKRADEEGEDKRADEEGEE) is disordered. Residues 25–60 (KRADEEGEDKRADEEGEDKRADEEGEDKRADEEGEE) show a composition bias toward basic and acidic residues. Leu77 bears the Leucine amide mark.

Belongs to the frog skin active peptide (FSAP) family. Brevinin subfamily. In terms of tissue distribution, expressed by the skin glands.

Its subcellular location is the secreted. Antimicrobial peptide. Active against the Gram-positive bacterium S.aureus (MIC=30 uM) and the yeast C.albicans (MIC=100 uM). Not effective against the Gram-negative bacterium E.coli at concentrations up to 250 uM. Lacks ability to induce contraction of smooth muscle in isolated guinea pig urinary bladder. Elicits histamine release from rat peritoneal mast cells. This chain is Kassorin-S, found in Kassina senegalensis (Senegal running frog).